The following is a 583-amino-acid chain: Ankyrin repeat-containing protein NPR4 (583 aa).

7 ANK repeats span residues 68 to 97 (HNDTDLHVAARGGDAGALRRALDEAAAAVA), 119 to 148 (AGETPLVAAAERGHLEVVRELLRHLDAEGV), 154 to 183 (SGYDALHVAAREGRHAVVQEMLLHNRLLAK), 188 to 218 (ANTSPLISAATRGHTEVVKLLLELDDFGLVE), 223 to 252 (NGKNSLHFAARQGHVEIVKALLEKDPQLAR), 257 to 286 (KGQTALHMAVKGTNCDVLRALVDADPAIVM), and 291 to 321 (NGNTALHVATRKKRAEIVAVLLRLPDTHVNA). 4 helical membrane passes run 414–434 (VTVVAVLFATVAFAAIFTVPG), 452–472 (IFFIFNAIALFTSLAVVVVQI), 492–512 (LMWLASVCTTISFIASCYIVL), and 518–538 (WAALLVSLIGGITMAGVLGTM).

The protein resides in the cell membrane. In terms of biological role, involved in salt stress tolerance. The protein is Ankyrin repeat-containing protein NPR4 of Oryza sativa subsp. japonica (Rice).